The primary structure comprises 224 residues: Deoxyribose-phosphate aldolase (224 aa).

Aspartate 93 functions as the Proton donor/acceptor in the catalytic mechanism. Catalysis depends on lysine 159, which acts as the Schiff-base intermediate with acetaldehyde. Lysine 189 functions as the Proton donor/acceptor in the catalytic mechanism.

This sequence belongs to the DeoC/FbaB aldolase family. DeoC type 1 subfamily.

It localises to the cytoplasm. It catalyses the reaction 2-deoxy-D-ribose 5-phosphate = D-glyceraldehyde 3-phosphate + acetaldehyde. It functions in the pathway carbohydrate degradation; 2-deoxy-D-ribose 1-phosphate degradation; D-glyceraldehyde 3-phosphate and acetaldehyde from 2-deoxy-alpha-D-ribose 1-phosphate: step 2/2. Catalyzes a reversible aldol reaction between acetaldehyde and D-glyceraldehyde 3-phosphate to generate 2-deoxy-D-ribose 5-phosphate. The polypeptide is Deoxyribose-phosphate aldolase (Mycobacterium bovis (strain ATCC BAA-935 / AF2122/97)).